The sequence spans 264 residues: Major prion protein (264 aa).

An N-terminal signal peptide occupies residues 1–24; the sequence is MVKSHIGSWILVLFVAMWSDVGLC. Residues 25 to 241 are interaction with GRB2, ERI3 and SYN1; that stretch reads KKRPKPGGGW…ESQAYYQRGA (217 aa). The segment at 28-118 is disordered; the sequence is PKPGGGWNTG…QWNKPSKPKT (91 aa). 6 consecutive repeat copies span residues 54-62, 63-70, 71-78, 79-86, 87-94, and 95-103. The tract at residues 54–103 is 6 X 8 AA tandem repeats of P-H-G-G-G-W-G-Q; the sequence is PQGGGSWGQPHGGGWGQPHGGSWGQPHGGGWGQPHGGGWGQPHGGGGWGQ. The span at 55–107 shows a compositional bias: gly residues; the sequence is QGGGSWGQPHGGGWGQPHGGSWGQPHGGGWGQPHGGGWGQPHGGGGWGQGGTH. Residues His72, Gly73, Gly74, His80, Gly81, Gly82, His88, Gly89, Gly90, His96, Gly98, and Gly99 each coordinate Cu(2+). An intrachain disulfide couples Cys190 to Cys225. 2 N-linked (GlcNAc...) asparagine glycosylation sites follow: Asn192 and Asn208. A lipid anchor (GPI-anchor amidated alanine) is attached at Ala241. Residues 242–264 constitute a propeptide, removed in mature form; it reads SVVLFSSPPVVLLISFLIFLIVG.

Belongs to the prion family. In terms of assembly, monomer and homodimer. Has a tendency to aggregate into amyloid fibrils containing a cross-beta spine, formed by a steric zipper of superposed beta-strands. Soluble oligomers may represent an intermediate stage on the path to fibril formation. Copper binding may promote oligomerization. Interacts with GRB2, APP, ERI3/PRNPIP and SYN1. Mislocalized cytosolically exposed PrP interacts with MGRN1; this interaction alters MGRN1 subcellular location and causes lysosomal enlargement. Interacts with KIAA1191.

The protein localises to the cell membrane. It is found in the golgi apparatus. In terms of biological role, its primary physiological function is unclear. Has cytoprotective activity against internal or environmental stresses. May play a role in neuronal development and synaptic plasticity. May be required for neuronal myelin sheath maintenance. May play a role in iron uptake and iron homeostasis. Soluble oligomers are toxic to cultured neuroblastoma cells and induce apoptosis (in vitro). Association with GPC1 (via its heparan sulfate chains) targets PRNP to lipid rafts. Also provides Cu(2+) or Zn(2+) for the ascorbate-mediated GPC1 deaminase degradation of its heparan sulfate side chains. This Boselaphus tragocamelus (Nilgai) protein is Major prion protein (PRNP).